The chain runs to 125 residues: MTYDFRAEIVKAKNTGSAKSGSHHWLLQRITAIILVLCSLWLLYFTLANKNSDVNIIIWELKRPINLIPLLIAVITSLYHAMLGMQVVIEDYISCNKLRNTLIIAVKLFSILTIVAFIVAVFYRG.

Residues 1–24 (MTYDFRAEIVKAKNTGSAKSGSHH) are Cytoplasmic-facing. Residues 25-45 (WLLQRITAIILVLCSLWLLYF) traverse the membrane as a helical segment. Residues 46–67 (TLANKNSDVNIIIWELKRPINL) lie on the Periplasmic side of the membrane. The chain crosses the membrane as a helical span at residues 68-89 (IPLLIAVITSLYHAMLGMQVVI). His80 provides a ligand contact to heme. Residues 90–99 (EDYISCNKLR) lie on the Cytoplasmic side of the membrane. Tyr92 serves as a coordination point for a ubiquinone. The helical transmembrane segment at 100–123 (NTLIIAVKLFSILTIVAFIVAVFY) threads the bilayer.

Part of an enzyme complex containing four subunits: a flavoprotein, an iron-sulfur protein, plus two membrane-anchoring proteins, SdhC and SdhD. Heme is required as a cofactor.

The protein resides in the cell inner membrane. The protein operates within carbohydrate metabolism; tricarboxylic acid cycle. Membrane-anchoring subunit of succinate dehydrogenase (SDH). In Rickettsia bellii (strain RML369-C), this protein is Succinate dehydrogenase hydrophobic membrane anchor subunit (sdhD).